A 390-amino-acid polypeptide reads, in one-letter code: Curcumin synthase 3 (390 aa).

The active site involves C164.

It belongs to the thiolase-like superfamily. Chalcone/stilbene synthases family. As to quaternary structure, homodimer.

It carries out the reaction (E)-feruloylacetyl-CoA + (E)-feruloyl-CoA + H2O = curcumin + CO2 + 2 CoA. The enzyme catalyses (E)-feruloylacetyl-CoA + (E)-4-coumaroyl-CoA + H2O = demethoxycurcumin + CO2 + 2 CoA. The catalysed reaction is (4-coumaroyl)acetyl-CoA + 4-coumaroyl-CoA + H2O = bisdemethoxycurcumin + CO2 + 2 CoA. It participates in secondary metabolite biosynthesis; flavonoid biosynthesis. Catalyzes the synthesis of curcumin by condensing feruloyl-CoA with a diketide-CoA in the curcuminoid biosynthesis. Also acts as a demethoxycurcumin synthase by accepting 4-coumaroyl-CoA as a starter substrate instead of feruloyl-CoA. The sequence is that of Curcumin synthase 3 (CURS3) from Curcuma longa (Turmeric).